The sequence spans 156 residues: MSRRGTAEKRTAKSDPIFRNRLVNMVVNRIMKDGKKSLAYQILYRAVKKIQQKTETNPLLVLRQAIRRVTPNIGVKTRRNKKGSTRKVPIEIGSKQGRALAIRWLLEASQKRPGRNMAFKLSSELVDAAKGSGGAIRKKEATHRMAEANRALAHFR.

This sequence belongs to the universal ribosomal protein uS7 family. As to quaternary structure, part of the 30S ribosomal subunit.

It is found in the plastid. Its subcellular location is the chloroplast. Functionally, one of the primary rRNA binding proteins, it binds directly to 16S rRNA where it nucleates assembly of the head domain of the 30S subunit. The chain is Small ribosomal subunit protein uS7cz/uS7cy (rps7-A) from Saccharum hybrid (Sugarcane).